The chain runs to 191 residues: MRLPLLVSAGVLLVALLPCPPCRALLSRGPVLGARQAPQHPQALDFLQPQQQPQQPQPRPVLLRMGEEYFLRLGNLNKSPAAPLSPASSPLTGSSGNRPDEVAANFFRALLQQLPLPRRPLDSPSGPAERGAENALSSRQEAPERERRSEEPPISLDLTFHLLREVLEMARAEQLAQQAHSNRKLMEIIGK.

An N-terminal signal peptide occupies residues 1 to 24 (MRLPLLVSAGVLLVALLPCPPCRA). A propeptide spanning residues 25-148 (LLSRGPVLGA…RQEAPERERR (124 aa)) is cleaved from the precursor. The interval 115–153 (PLPRRPLDSPSGPAERGAENALSSRQEAPERERRSEEPP) is disordered. Residues 141 to 151 (EAPERERRSEE) are compositionally biased toward basic and acidic residues. Ile189 carries the isoleucine amide modification.

Belongs to the sauvagine/corticotropin-releasing factor/urotensin I family. Interacts (via C-terminus) with CRFR1 (via N-terminal extracellular domain). Produced by the hypothalamus.

The protein resides in the secreted. In terms of biological role, hormone regulating the release of corticotropin from pituitary gland. Induces NLRP6 in intestinal epithelial cells, hence may influence gut microbiota profile. This is Corticoliberin (CRH) from Sus scrofa (Pig).